A 336-amino-acid polypeptide reads, in one-letter code: Nuclear envelope-associated protein 1 (336 aa).

A coiled-coil region spans residues 125–261 (CSMLKQQLDD…RRTDQDLKKK (137 aa)). The Bipartite nuclear localization signal motif lies at 240–261 (KTKELESQLEKQRRTDQDLKKK). A helical transmembrane segment spans residues 313–330 (FWDNSGFKIVVSMSMLML).

Forms heteromers with NEAP2 and NEAP3. Interacts with SUN1; SUN2 and bZIP18.

The protein localises to the nucleus inner membrane. It is found in the nucleus. The protein resides in the nucleoplasm. In Arabidopsis thaliana (Mouse-ear cress), this protein is Nuclear envelope-associated protein 1.